The sequence spans 1406 residues: Inactive tyrosine-protein kinase PRAG1 (1406 aa).

A Phosphoserine modification is found at Ser148. Residues 184 to 193 (EEKAVHKEKP) are compositionally biased toward basic and acidic residues. 2 disordered regions span residues 184-205 (EEKAVHKEKPSFPYQDRPSTQE) and 217-248 (TTSGCHQGPGPLRESLPSEDDSDQRCSPSGDS). Phosphotyrosine is present on residues Tyr253, Tyr365, and Tyr413. Disordered stretches follow at residues 372–470 (PAPE…TPQV) and 484–854 (DHRT…HSET). Positions 526–542 (RESHAHSASESKPKERP) are enriched in basic and acidic residues. Residues 546-576 (PKLSKSSPVGSPVSPSAGGPPVSPLADLSDG) show a composition bias toward low complexity. 2 stretches are compositionally biased toward polar residues: residues 660 to 671 (NGPTDHSNSTTW) and 678 to 695 (DGSSGQNSKVGTGMSKSA). Ser696 and Ser745 each carry phosphoserine. Composition is skewed to polar residues over residues 737-746 (SQGSAESLSP) and 754-770 (SFTTGSTDSLASDSRTC). Ser782 carries the post-translational modification Phosphoserine. Residues 798–808 (SGSTEDVSPSG) are compositionally biased toward polar residues. Ser826 carries the phosphoserine modification. The segment at 933–976 (STQLQLHGLLSNISSKEGTYAKLGGLYTQSLARLVAKCEDLFMG) is required for homodimerization. Residues 978-1329 (QKKELHFNEN…EAKRVLQCLL (352 aa)) enclose the Protein kinase domain. Pro residues predominate over residues 1163-1173 (GPAPAPAPAPA). The disordered stretch occupies residues 1163-1206 (GPAPAPAPAPAPAAAAPPCSSAAPPAGGTLSPAAGPASPEGPRE). Positions 1174-1202 (PAAAAPPCSSAAPPAGGTLSPAAGPASPE) are enriched in low complexity. Residues 1331–1406 (GPRRELVQQP…LQSLKLLQLL (76 aa)) form a required for homodimerization region.

This sequence belongs to the protein kinase superfamily. In terms of assembly, homodimer. Dimerization leads to the catalytic activation of CSK. Interacts (via C-terminus) with RND2. Interacts with CSK (via SH2 domain) in a Tyr-413 phosphorylation-dependent manner; this interaction potentiates kinase activity of CSK. Interacts with PEAK1. Interacts with NOTCH1 intracellular domain (N1ICD). Forms a complex with N1ICD and MAML1, in a MAML1-dependent manner. Phosphorylated by CSK on Tyr-253, Tyr-365, and Tyr-413; Tyr-413 is a primary site of phosphorylation.

It is found in the cytoplasm. The protein resides in the cell junction. It localises to the focal adhesion. The protein localises to the nucleus. In terms of biological role, catalytically inactive protein kinase that acts as a scaffold protein. Functions as an effector of the small GTPase RND2, which stimulates RhoA activity and inhibits NGF-induced neurite outgrowth. Promotes Src family kinase (SFK) signaling by regulating the subcellular localization of CSK, a negative regulator of these kinases, leading to the regulation of cell morphology and motility by a CSK-dependent mechanism. Acts as a critical coactivator of Notch signaling. The polypeptide is Inactive tyrosine-protein kinase PRAG1 (Homo sapiens (Human)).